Reading from the N-terminus, the 231-residue chain is Orotidine 5'-phosphate decarboxylase (231 aa).

Substrate contacts are provided by residues Asp11, Lys34, 61–70, Thr117, Arg179, Gln188, Gly208, and Arg209; that span reads DLKLHDIPNT. The Proton donor role is filled by Lys63.

The protein belongs to the OMP decarboxylase family. Type 1 subfamily. As to quaternary structure, homodimer.

It catalyses the reaction orotidine 5'-phosphate + H(+) = UMP + CO2. It participates in pyrimidine metabolism; UMP biosynthesis via de novo pathway; UMP from orotate: step 2/2. Functionally, catalyzes the decarboxylation of orotidine 5'-monophosphate (OMP) to uridine 5'-monophosphate (UMP). The chain is Orotidine 5'-phosphate decarboxylase from Streptococcus suis (strain 98HAH33).